The chain runs to 94 residues: MKKYEILYIMRPNIGDEEIKKNVETINKIFYNNENKIIQSKELGLKDLAYCIDKHYKGYYVSMFLNAMPQMIEEFNRVVKINEDIIRSIVIKEE.

The protein belongs to the bacterial ribosomal protein bS6 family.

In terms of biological role, binds together with bS18 to 16S ribosomal RNA. The protein is Small ribosomal subunit protein bS6 of Phytoplasma mali (strain AT).